Reading from the N-terminus, the 336-residue chain is Fructose-1,6-bisphosphatase class 1 (336 aa).

Residues glutamate 90, aspartate 112, leucine 114, and aspartate 115 each contribute to the Mg(2+) site. Substrate-binding positions include 115 to 118, asparagine 211, and lysine 277; that span reads DGSS. Glutamate 283 is a Mg(2+) binding site.

The protein belongs to the FBPase class 1 family. Homotetramer. Mg(2+) serves as cofactor.

The protein resides in the cytoplasm. It catalyses the reaction beta-D-fructose 1,6-bisphosphate + H2O = beta-D-fructose 6-phosphate + phosphate. The protein operates within carbohydrate biosynthesis; gluconeogenesis. This Pseudomonas putida (strain GB-1) protein is Fructose-1,6-bisphosphatase class 1.